A 443-amino-acid polypeptide reads, in one-letter code: Amino-acid acetyltransferase (443 aa).

Residues 296–443 form the N-acetyltransferase domain; it reads EQIRRATIND…RSKVLMADLG (148 aa).

This sequence belongs to the acetyltransferase family. ArgA subfamily. As to quaternary structure, homohexamer.

It is found in the cytoplasm. It carries out the reaction L-glutamate + acetyl-CoA = N-acetyl-L-glutamate + CoA + H(+). It functions in the pathway amino-acid biosynthesis; L-arginine biosynthesis; N(2)-acetyl-L-ornithine from L-glutamate: step 1/4. The sequence is that of Amino-acid acetyltransferase (argA) from Salmonella typhi.